Reading from the N-terminus, the 334-residue chain is N-acetyl-gamma-glutamyl-phosphate reductase (334 aa).

Cysteine 154 is an active-site residue.

It belongs to the NAGSA dehydrogenase family. Type 1 subfamily.

The protein resides in the cytoplasm. It carries out the reaction N-acetyl-L-glutamate 5-semialdehyde + phosphate + NADP(+) = N-acetyl-L-glutamyl 5-phosphate + NADPH + H(+). Its pathway is amino-acid biosynthesis; L-arginine biosynthesis; N(2)-acetyl-L-ornithine from L-glutamate: step 3/4. Functionally, catalyzes the NADPH-dependent reduction of N-acetyl-5-glutamyl phosphate to yield N-acetyl-L-glutamate 5-semialdehyde. This Buchnera aphidicola subsp. Acyrthosiphon pisum (strain 5A) protein is N-acetyl-gamma-glutamyl-phosphate reductase.